Reading from the N-terminus, the 236-residue chain is 2,3,4,5-tetrahydropyridine-2,6-dicarboxylate N-acetyltransferase (236 aa).

The protein belongs to the transferase hexapeptide repeat family. DapH subfamily.

It catalyses the reaction (S)-2,3,4,5-tetrahydrodipicolinate + acetyl-CoA + H2O = L-2-acetamido-6-oxoheptanedioate + CoA. It participates in amino-acid biosynthesis; L-lysine biosynthesis via DAP pathway; LL-2,6-diaminopimelate from (S)-tetrahydrodipicolinate (acetylase route): step 1/3. Its function is as follows. Catalyzes the transfer of an acetyl group from acetyl-CoA to tetrahydrodipicolinate. This chain is 2,3,4,5-tetrahydropyridine-2,6-dicarboxylate N-acetyltransferase, found in Clostridium perfringens (strain SM101 / Type A).